Reading from the N-terminus, the 432-residue chain is 3-phosphoshikimate 1-carboxyvinyltransferase (432 aa).

Lys-22, Ser-23, and Arg-27 together coordinate 3-phosphoshikimate. Lys-22 provides a ligand contact to phosphoenolpyruvate. 2 residues coordinate phosphoenolpyruvate: Gly-96 and Arg-127. Positions 173, 174, 175, 201, 316, 339, and 343 each coordinate 3-phosphoshikimate. A phosphoenolpyruvate-binding site is contributed by Gln-175. Asp-316 acts as the Proton acceptor in catalysis. Positions 347, 391, and 416 each coordinate phosphoenolpyruvate.

The protein belongs to the EPSP synthase family. Monomer.

It localises to the cytoplasm. The enzyme catalyses 3-phosphoshikimate + phosphoenolpyruvate = 5-O-(1-carboxyvinyl)-3-phosphoshikimate + phosphate. The protein operates within metabolic intermediate biosynthesis; chorismate biosynthesis; chorismate from D-erythrose 4-phosphate and phosphoenolpyruvate: step 6/7. Functionally, catalyzes the transfer of the enolpyruvyl moiety of phosphoenolpyruvate (PEP) to the 5-hydroxyl of shikimate-3-phosphate (S3P) to produce enolpyruvyl shikimate-3-phosphate and inorganic phosphate. In Actinobacillus pleuropneumoniae serotype 7 (strain AP76), this protein is 3-phosphoshikimate 1-carboxyvinyltransferase.